The following is a 221-amino-acid chain: Ribonuclease S-2 (221 aa).

The N-terminal stretch at 1-20 is a signal peptide; sequence MIYIFTMVFSLNVLILSSSA. Q31 contacts RNA. C37 and C44 are disulfide-bonded. RNA is bound by residues H55, 91–92, F101, 104–105, and 108–109; these read NV, KQ, and KH. H55 functions as the Proton donor in the catalytic mechanism. C70 and C112 are disulfide-bonded. Residue N91 is glycosylated (N-linked (GlcNAc...) asparagine). Q105 is an active-site residue. The active-site Proton acceptor is H109. Residues N137, N153, and N195 are each glycosylated (N-linked (GlcNAc...) asparagine). 2 cysteine pairs are disulfide-bonded: C176-C214 and C191-C202.

Belongs to the RNase T2 family. Post-translationally, N-linked core structure at Asn-91, Asn-137, and Asn-153 contains xylose and at Asn-195 contains xylose and fucose.

It is found in the secreted. Its subcellular location is the extracellular space. The enzyme catalyses a ribonucleotidyl-ribonucleotide-RNA + H2O = a 3'-end 3'-phospho-ribonucleotide-RNA + a 5'-end dephospho-ribonucleoside-RNA + H(+). Its function is as follows. Self-incompatibility (SI) is the inherited ability of a flowering plant to prevent self-fertilization by discriminating between self and non-self pollen during pollination. In many species, self-incompatibility is controlled by the single, multiallelic locus S. In Pyrus pyrifolia (Chinese pear), this protein is Ribonuclease S-2.